A 245-amino-acid polypeptide reads, in one-letter code: 14-3-3 protein zeta (245 aa).

This sequence belongs to the 14-3-3 family. In terms of assembly, homodimer.

The protein localises to the cytoplasm. Functionally, adapter protein implicated in the regulation of a large spectrum of both general and specialized signaling pathways. Binds to a large number of partners, usually by recognition of a phosphoserine or phosphothreonine motif. Binding generally results in the modulation of the activity of the binding partner. The protein is 14-3-3 protein zeta (ywhaz) of Xenopus tropicalis (Western clawed frog).